Reading from the N-terminus, the 867-residue chain is Cilium assembly protein DZIP1 (867 aa).

The segment at 12–203 (MPFQKHVYYP…KANYYQCHFC (192 aa)) is mediates interaction with PCM1. Residues 12-367 (MPFQKHVYYP…QDFHNVMQLL (356 aa)) form a mediates interaction with GLI3 and localization to the cilium basal body region. Residues 154–278 (CDGEQSKKLL…SKEYEMQKTK (125 aa)) form a required for interaction with DAZ1 region. A C2H2-type zinc finger spans residues 198-221 (YQCHFCDKAFMNQAFLQSHIQRRH). Position 226 is a phosphoserine; by PLK1 (serine 226). Coiled-coil stretches lie at residues 230-340 (YQKN…KSNI), 401-445 (TSMI…FTCN), and 568-588 (DQLHRVLKSVESERHKQEREI). Residues 446–617 (PLNSISEPKG…EKALLSSDQC (172 aa)) form a mediates interaction with GDI2 and RAB8A region. Polar residues-rich tracts occupy residues 643–654 (LIRQKAVSTDRT), 671–680 (KSSTITTPPF), and 708–718 (NKGSFGKNTVK). 2 disordered regions span residues 643 to 768 (LIRQ…GGTN) and 796 to 867 (SLEE…TSDV). Residues 722–733 (DGTEGSEIEDTD) are compositionally biased toward acidic residues. The span at 807–823 (SGKEQKEPPPAKNEPHF) shows a compositional bias: basic and acidic residues. The span at 848 to 859 (SSTLKSSLVTVT) shows a compositional bias: low complexity.

This sequence belongs to the DZIP C2H2-type zinc-finger protein family. As to quaternary structure, interacts with DAZ1. Interacts with the BBSome; recruits the BBSome to centriolar satellites of the cilium. Interacts with PCM1; localizes DZIP1 and the associated BBSome to centriolar satellites. Interacts with RAB8A (GDP-bound inactive form); recruits RAB8A to the basal body of the cilium and prevents its inhibition by GDI2. Interacts with GDI2; negatively regulates the interaction of GDI2 with GDP-bound RAB8A. Interacts with GLI3; retains GLI3 within the cytoplasm. Interacts with CEP164. Interacts with IFT88. Post-translationally, phosphorylation at Ser-226 by PLK1 before mitosis prevents interaction with PCM1 and localization to centriolar satellites. Thereby, it negatively regulates the localization of the BBSome to centriolar satellites. As to expression, predominantly expressed in testis (at protein level). Also expressed in fetal brain, adult oocytes and ovary. Expressed in undifferentiated ES cells. In testis, it is specifically expressed in germ cells (at protein level). Expressed in mature germ cells and secondary spermatocytes, while it is weakly or not expressed in primary spermatocytes.

The protein localises to the cytoplasm. Its subcellular location is the cytoskeleton. It is found in the cilium basal body. It localises to the microtubule organizing center. The protein resides in the centrosome. The protein localises to the centriolar satellite. Its subcellular location is the centriole. It is found in the nucleus. It localises to the nucleus speckle. In terms of biological role, molecular adapter that recruits protein complexes required for cilium assembly and function to the cilium basal body. At the exit of mitosis, localizes to the basal body and ciliary base of the forming primary cilium where it recruits and activates RAB8A to direct vesicle-mediated transport of proteins to the cilium. Also recruits the BBSome, a complex involved in cilium biogenesis, by bridging it to PCM1 at the centriolar satellites of the cilium. It is also required for the recruitment to the cilium basal body of the intraflagellar transport (IFT) machinery as well as the ciliary appendage proteins CEP164 and NINEIN. Functions as a regulator of Hedgehog signaling both through its role in cilium assembly but also probably through its ability to retain GLI3 within the cytoplasm. It is involved in spermatogenesis through its role in organization of the basal body and assembly of the sperm flagellum. Also indirectly involved in heart development through its function in ciliogenesis. The protein is Cilium assembly protein DZIP1 of Homo sapiens (Human).